The following is a 96-amino-acid chain: Large ribosomal subunit protein eL43 (96 aa).

Residues 41–62 (CPVCAFPKLKRAGTSIWVCDKC) form a C4-type zinc finger.

The protein belongs to the eukaryotic ribosomal protein eL43 family. Zn(2+) serves as cofactor.

The polypeptide is Large ribosomal subunit protein eL43 (Methanococcus vannielii (strain ATCC 35089 / DSM 1224 / JCM 13029 / OCM 148 / SB)).